Reading from the N-terminus, the 441-residue chain is Tol-Pal system protein TolB (441 aa).

The N-terminal stretch at 1-39 is a signal peptide; that stretch reads MPAMTPAFRRADLTGFLRTYGAALILLLAAMLAWQPAQA.

The protein belongs to the TolB family. In terms of assembly, the Tol-Pal system is composed of five core proteins: the inner membrane proteins TolA, TolQ and TolR, the periplasmic protein TolB and the outer membrane protein Pal. They form a network linking the inner and outer membranes and the peptidoglycan layer.

It is found in the periplasm. In terms of biological role, part of the Tol-Pal system, which plays a role in outer membrane invagination during cell division and is important for maintaining outer membrane integrity. The chain is Tol-Pal system protein TolB from Bordetella parapertussis (strain 12822 / ATCC BAA-587 / NCTC 13253).